Here is a 217-residue protein sequence, read N- to C-terminus: Large ribosomal subunit protein uL1 (217 aa).

This sequence belongs to the universal ribosomal protein uL1 family.

The chain is Large ribosomal subunit protein uL1 (RPL10A) from Candida glabrata (strain ATCC 2001 / BCRC 20586 / JCM 3761 / NBRC 0622 / NRRL Y-65 / CBS 138) (Yeast).